Consider the following 645-residue polypeptide: Acetyl-coenzyme A synthetase (645 aa).

Residues 190 to 193 and Thr-308 each bind CoA; that span reads RGGR. Residues 384–386, 408–413, Asp-497, and Arg-512 each bind ATP; these read GEP and DTWWQT. Residue Ser-520 participates in CoA binding. Residue Arg-523 participates in ATP binding. 3 residues coordinate Mg(2+): Val-534, His-536, and Val-539. Residue Lys-606 is modified to N6-acetyllysine.

It belongs to the ATP-dependent AMP-binding enzyme family. Mg(2+) serves as cofactor. In terms of processing, acetylated. Deacetylation by the SIR2-homolog deacetylase activates the enzyme.

It carries out the reaction acetate + ATP + CoA = acetyl-CoA + AMP + diphosphate. Its function is as follows. Catalyzes the conversion of acetate into acetyl-CoA (AcCoA), an essential intermediate at the junction of anabolic and catabolic pathways. AcsA undergoes a two-step reaction. In the first half reaction, AcsA combines acetate with ATP to form acetyl-adenylate (AcAMP) intermediate. In the second half reaction, it can then transfer the acetyl group from AcAMP to the sulfhydryl group of CoA, forming the product AcCoA. The chain is Acetyl-coenzyme A synthetase from Halorhodospira halophila (strain DSM 244 / SL1) (Ectothiorhodospira halophila (strain DSM 244 / SL1)).